Reading from the N-terminus, the 329-residue chain is NADH-quinone oxidoreductase subunit H (329 aa).

9 helical membrane-spanning segments follow: residues Leu-9–Ile-29, Gly-42–Phe-62, Phe-75–Ile-95, Ile-117–Gly-137, Ile-154–Val-174, Gly-188–Ala-208, Leu-238–Ile-258, Trp-269–Trp-291, and Trp-309–Ile-329.

Belongs to the complex I subunit 1 family. As to quaternary structure, NDH-1 is composed of 14 different subunits. Subunits NuoA, H, J, K, L, M, N constitute the membrane sector of the complex.

It is found in the cell inner membrane. The enzyme catalyses a quinone + NADH + 5 H(+)(in) = a quinol + NAD(+) + 4 H(+)(out). Functionally, NDH-1 shuttles electrons from NADH, via FMN and iron-sulfur (Fe-S) centers, to quinones in the respiratory chain. The immediate electron acceptor for the enzyme in this species is believed to be ubiquinone. Couples the redox reaction to proton translocation (for every two electrons transferred, four hydrogen ions are translocated across the cytoplasmic membrane), and thus conserves the redox energy in a proton gradient. This subunit may bind ubiquinone. This Helicobacter pylori (strain P12) protein is NADH-quinone oxidoreductase subunit H.